The following is a 126-amino-acid chain: Fluoride-specific ion channel FluC (126 aa).

Helical transmembrane passes span 5–25, 39–59, 69–89, and 103–123; these read FILA…LVGI, TLFI…LFAV, IFLV…SLDT, and AYMI…IQIV. Residues Gly-77 and Thr-80 each contribute to the Na(+) site.

Belongs to the fluoride channel Fluc/FEX (TC 1.A.43) family.

The protein localises to the cell inner membrane. It catalyses the reaction fluoride(in) = fluoride(out). Na(+) is not transported, but it plays an essential structural role and its presence is essential for fluoride channel function. Fluoride-specific ion channel. Important for reducing fluoride concentration in the cell, thus reducing its toxicity. The chain is Fluoride-specific ion channel FluC from Nitrobacter winogradskyi (strain ATCC 25391 / DSM 10237 / CIP 104748 / NCIMB 11846 / Nb-255).